The sequence spans 289 residues: Ribosomal RNA small subunit methyltransferase A (289 aa).

Residues Asn-21, Leu-23, Gly-48, Glu-69, Asp-94, and Asn-120 each contribute to the S-adenosyl-L-methionine site.

This sequence belongs to the class I-like SAM-binding methyltransferase superfamily. rRNA adenine N(6)-methyltransferase family. RsmA subfamily.

It is found in the cytoplasm. The enzyme catalyses adenosine(1518)/adenosine(1519) in 16S rRNA + 4 S-adenosyl-L-methionine = N(6)-dimethyladenosine(1518)/N(6)-dimethyladenosine(1519) in 16S rRNA + 4 S-adenosyl-L-homocysteine + 4 H(+). In terms of biological role, specifically dimethylates two adjacent adenosines (A1518 and A1519) in the loop of a conserved hairpin near the 3'-end of 16S rRNA in the 30S particle. May play a critical role in biogenesis of 30S subunits. In Actinobacillus pleuropneumoniae serotype 7 (strain AP76), this protein is Ribosomal RNA small subunit methyltransferase A.